We begin with the raw amino-acid sequence, 487 residues long: Serine/threonine-protein kinase 4 (487 aa).

M1 carries the post-translational modification N-acetylmethionine. A Phosphothreonine modification is found at T3. The Protein kinase domain maps to 30–281 (FDVLEKLGEG…ATQLLQHPFV (252 aa)). ATP is bound by residues 36-44 (LGEGSYGSV) and K59. D149 (proton acceptor) is an active-site residue. A Phosphothreonine; by autocatalysis modification is found at T183. S265 bears the Phosphoserine mark. A coiled-coil region spans residues 290–310 (LRDLINEAMDVKLKRQESQQR). Positions 303–312 (KRQESQQREV) are enriched in basic and acidic residues. Residues 303–332 (KRQESQQREVDQDDEENSEEDEMDSGTMVR) are disordered. A compositionally biased stretch (acidic residues) spans 313–326 (DQDDEENSEEDEMD). S320 carries the phosphoserine modification. 2 positions are modified to phosphothreonine: T340 and T367. T387 is subject to Phosphothreonine; by PKB/AKT1. Phosphoserine is present on residues S410 and S414. Position 433 is a phosphotyrosine (Y433). In terms of domain architecture, SARAH spans 433–480 (YEFLKSWTVEDLQKRLLALDPMMEQEIEEIRQKYQSKRQPILDAIEAK).

It belongs to the protein kinase superfamily. STE Ser/Thr protein kinase family. STE20 subfamily. Homodimer; mediated via the coiled-coil region. Interacts with NORE1, which inhibits autoactivation. Interacts with and stabilizes SAV1. Interacts with RASSF1. Interacts with FOXO3. Interacts with RASSF2 (via SARAH domain). Interacts with AR, PKB/AKT1, TNNI3 and SIRT1. Interacts with DLG5 (via PDZ domain 3). Interacts with MARK3 in the presence of DLG5. Interacts with SCRIB in the presence of DLG5. The cofactor is Mg(2+). In terms of processing, autophosphorylated on serine and threonine residues. Phosphorylation at Thr-387 by PKB/AKT1, leads to inhibition of its: kinase activity, nuclear translocation and autophosphorylation at Thr-183. It also diminishes its cleavage by caspases and its ability to phosphorylate FOXO3. Post-translationally, proteolytically cleaved by caspase-3 during apoptosis at Asp-326 and Asp-349 resulting in a 37 kDa or a 39 kDa subunit respectively. The 39 kDa subunit is further cleaved into the 37 kDa form. Proteolytic cleavage results in kinase activation and nuclear translocation of the truncated form (MST1/N). It is less likely that cleavage at Asp-349 is a prerequisite for activation as this site is not conserved in the murine ortholog. In terms of tissue distribution, expressed in prostate cancer and levels increase from the normal to the malignant state (at protein level). Ubiquitously expressed.

The protein resides in the cytoplasm. The protein localises to the nucleus. It carries out the reaction L-seryl-[protein] + ATP = O-phospho-L-seryl-[protein] + ADP + H(+). The catalysed reaction is L-threonyl-[protein] + ATP = O-phospho-L-threonyl-[protein] + ADP + H(+). Its activity is regulated as follows. Inhibited by the C-terminal non-catalytic region. Activated by caspase-cleavage. Full activation also requires homodimerization and autophosphorylation of Thr-183. Activated by RASSF1 which acts by preventing its dephosphorylation. In terms of biological role, stress-activated, pro-apoptotic kinase which, following caspase-cleavage, enters the nucleus and induces chromatin condensation followed by internucleosomal DNA fragmentation. Key component of the Hippo signaling pathway which plays a pivotal role in organ size control and tumor suppression by restricting proliferation and promoting apoptosis. The core of this pathway is composed of a kinase cascade wherein STK3/MST2 and STK4/MST1, in complex with its regulatory protein SAV1, phosphorylates and activates LATS1/2 in complex with its regulatory protein MOB1, which in turn phosphorylates and inactivates YAP1 oncoprotein and WWTR1/TAZ. Phosphorylation of YAP1 by LATS2 inhibits its translocation into the nucleus to regulate cellular genes important for cell proliferation, cell death, and cell migration. STK3/MST2 and STK4/MST1 are required to repress proliferation of mature hepatocytes, to prevent activation of facultative adult liver stem cells (oval cells), and to inhibit tumor formation. Phosphorylates 'Ser-14' of histone H2B (H2BS14ph) during apoptosis. Phosphorylates FOXO3 upon oxidative stress, which results in its nuclear translocation and cell death initiation. Phosphorylates MOBKL1A, MOBKL1B and RASSF2. Phosphorylates TNNI3 (cardiac Tn-I) and alters its binding affinity to TNNC1 (cardiac Tn-C) and TNNT2 (cardiac Tn-T). Phosphorylates FOXO1 on 'Ser-212' and regulates its activation and stimulates transcription of PMAIP1 in a FOXO1-dependent manner. Phosphorylates SIRT1 and inhibits SIRT1-mediated p53/TP53 deacetylation, thereby promoting p53/TP53 dependent transcription and apoptosis upon DNA damage. Acts as an inhibitor of PKB/AKT1. Phosphorylates AR on 'Ser-650' and suppresses its activity by intersecting with PKB/AKT1 signaling and antagonizing formation of AR-chromatin complexes. This Homo sapiens (Human) protein is Serine/threonine-protein kinase 4.